We begin with the raw amino-acid sequence, 346 residues long: tRNA N6-adenosine threonylcarbamoyltransferase (346 aa).

Residues histidine 110 and histidine 114 each contribute to the Fe cation site. Residues 132-136 (LLSGG), aspartate 165, glycine 178, and asparagine 274 each bind substrate. Residue aspartate 298 participates in Fe cation binding.

The protein belongs to the KAE1 / TsaD family. It depends on Fe(2+) as a cofactor.

It is found in the cytoplasm. The enzyme catalyses L-threonylcarbamoyladenylate + adenosine(37) in tRNA = N(6)-L-threonylcarbamoyladenosine(37) in tRNA + AMP + H(+). Its function is as follows. Required for the formation of a threonylcarbamoyl group on adenosine at position 37 (t(6)A37) in tRNAs that read codons beginning with adenine. Is involved in the transfer of the threonylcarbamoyl moiety of threonylcarbamoyl-AMP (TC-AMP) to the N6 group of A37, together with TsaE and TsaB. TsaD likely plays a direct catalytic role in this reaction. The protein is tRNA N6-adenosine threonylcarbamoyltransferase of Borreliella afzelii (strain PKo) (Borrelia afzelii).